We begin with the raw amino-acid sequence, 316 residues long: N-acetyl-gamma-glutamyl-phosphate reductase (316 aa).

The active site involves C136.

It belongs to the NAGSA dehydrogenase family. Type 1 subfamily.

The protein resides in the cytoplasm. The enzyme catalyses N-acetyl-L-glutamate 5-semialdehyde + phosphate + NADP(+) = N-acetyl-L-glutamyl 5-phosphate + NADPH + H(+). The protein operates within amino-acid biosynthesis; L-arginine biosynthesis; N(2)-acetyl-L-ornithine from L-glutamate: step 3/4. Functionally, catalyzes the NADPH-dependent reduction of N-acetyl-5-glutamyl phosphate to yield N-acetyl-L-glutamate 5-semialdehyde. This is N-acetyl-gamma-glutamyl-phosphate reductase from Xanthomonas axonopodis pv. citri (strain 306).